The chain runs to 466 residues: Alpha-1,3-mannosyltransferase CMT1 (466 aa).

Positions 1 to 23 are disordered; it reads MFRNTLRTFPRPATPSLPTSSHS. The Cytoplasmic portion of the chain corresponds to 1–33; it reads MFRNTLRTFPRPATPSLPTSSHSPIARASLSKS. A helical; Signal-anchor for type II membrane protein transmembrane segment spans residues 34–54; it reads PLFVLSLVLVCIFFLSFLSHP. Residues 55–466 lie on the Lumenal side of the membrane; it reads DPSARKLQWP…ETRWVQPWLE (412 aa).

Mg(2+) is required as a cofactor. The cofactor is Mn(2+). Requires Co(2+) as cofactor.

Its subcellular location is the golgi apparatus membrane. Its pathway is protein modification; protein glycosylation. In terms of biological role, responsible for addition of mannose residues in an alpha-1,3 linkage to a polymannosly precursor. May be involved in synthesis of capsule glucuronoxylomannan. The sequence is that of Alpha-1,3-mannosyltransferase CMT1 from Cryptococcus neoformans var. neoformans serotype D (strain JEC21 / ATCC MYA-565) (Filobasidiella neoformans).